The primary structure comprises 208 residues: Probable GTP-binding protein EngB (208 aa).

One can recognise an EngB-type G domain in the interval 25-199 (TGIEVAFAGR…RQKLDSWYNG (175 aa)). GTP-binding positions include 33–40 (GRSNAGKS), 60–64 (GRTQL), 78–81 (DLPG), 145–148 (TKSD), and 178–180 (FSS). Mg(2+)-binding residues include S40 and T62.

This sequence belongs to the TRAFAC class TrmE-Era-EngA-EngB-Septin-like GTPase superfamily. EngB GTPase family. It depends on Mg(2+) as a cofactor.

Functionally, necessary for normal cell division and for the maintenance of normal septation. The chain is Probable GTP-binding protein EngB from Enterobacter sp. (strain 638).